We begin with the raw amino-acid sequence, 255 residues long: uncharacterized protein (255 aa).

The signal sequence occupies residues 1 to 23; that stretch reads MKRLNKLVLYISFLILVISFTAG. Cysteine 24 is lipidated: N-palmitoyl cysteine. Cysteine 24 carries the S-diacylglycerol cysteine lipid modification.

It belongs to the staphylococcal tandem lipoprotein family.

It localises to the cell membrane. This is an uncharacterized protein from Staphylococcus aureus (strain N315).